The primary structure comprises 805 residues: Leucine--tRNA ligase (805 aa).

Residues P40–H51 carry the 'HIGH' region motif. A 'KMSKS' region motif is present at residues K577–S581. K580 is a binding site for ATP.

It belongs to the class-I aminoacyl-tRNA synthetase family.

The protein localises to the cytoplasm. It catalyses the reaction tRNA(Leu) + L-leucine + ATP = L-leucyl-tRNA(Leu) + AMP + diphosphate. This chain is Leucine--tRNA ligase, found in Pediococcus pentosaceus (strain ATCC 25745 / CCUG 21536 / LMG 10740 / 183-1w).